A 1315-amino-acid polypeptide reads, in one-letter code: MKLGQRNSVCILSSRERGAPGLASYRVLQQLVEEKTQRMKWQSQKVELPDSPRSTFLLAFSPDRSLMASTHVNHNIYITEVKSGKCVHSLVGHRRTPWCLTFHPIIPGLIASGCLDGEVRIWDLHGGSESWLTESNSAIASLAFHPTAQLLLIATNNEVHLWDWSRKEPFTVVKTASETERVRLVRFDPLGHYLLTAIVNPSNQPNDDDPEIPMDSVEMPHLRQRSFLQSQPARRTPILHNFLHILTSRNSVPQAGGAHSASTDGSSDSSGPYTLMCVQPLGMVCFCSRCSAARVPSPPDEDPSDSASLEAQAHTFSSARTEPLQMSRFSVESRAANRSSAFSSVYGGGSNMRNHSSSSGRRGVTGMAPVPHFRQHPPGREGGGRHPGADWTVSGLNGQSSSMTPQRTGASSVSLLSVLRQQETSFQSPVYTSASDRWGSTPGTSSSRHRPPEEEGQSSSSSIHSVLRCNLYRYFMDYEGTQDTVQPLDGSRQDQQTQEMLNNNMDPEQPGPSHYQSPYSGENPPHSHMNRCRVCHNLFTYNQGSRRWDRTGQPSSTERNTPWQPSSSAFHSVAPVSQSNEHLLEHRPIESTPNTPEPHVPFSQRTDTGQHEEQAVGLVFNQETGQLERVYRQSASSRSANISQGALNQEMPEDTPDNDYLRRLSPAAYYAQRMIQYLSRRDSVRQHSHRPPSRPRPLSSNPSSLSPSPVPNAESSEVDFEEFEENGSRYRTPRNARMSAPSLGRFVGTRRFLLPEFLPYAGIFHERGQPGLATHSSVNRVLAGAVIGDGQSAVASNIANTTYRLQWWDFTKFDLPEISNASVNVLVPNCKIYNDASCDISADGQLLAVFIPSSQRGFPDEGILAVYSLAPHNLGEMLYSKRFGPNAISVSLSPMGRYVMVGLASRRILLHQISDHMVAQVFRLQQPHAGETSMRRVFDVVYPMAPDQRRHVSINSARWLPDPGLGLAYGTNKGDLVICRPVDVHSDGSSTSEHSERMFTINNGGGVGPSSSRSGDRAGSSRTDRRSRRDIGLMNGVGLQPQPPAASVTSQGTQTQNQRLQHAETQTDRDLPDDPQQPSTSQGSQVTDATESLDFETLPEDSGSEVVPETPPHSRPQEDEGSDPSEPSTDSTGQAEYVSRIRRLMAEGGMTAVVQREQSTTMASMGSFGNNIIVSHRIHRGSQTGADAQNRTRLSPIPGPSSGAPESLAAASYSRVLTNTLGFRGDTAQGIDLTEQERLHTSFFTPEFSPLFSSAVDATGPSSSIGADSVLEGEDFHDFASLPPSLLSSSPSLSPVNNSNYSNSDSSYLGDEYGR.

3 WD repeats span residues 50-89 (DSPR…CVHS), 92-132 (GHRR…ESWL), and 134-174 (ESNS…TVVK). Disordered regions lie at residues 294 to 322 (RVPS…ARTE), 342 to 409 (FSSV…QRTG), 426 to 463 (FQSP…SSSI), 502 to 526 (NNNM…NPPH), 545 to 610 (SRRW…DTGQ), 630 to 660 (VYRQ…DNDY), 681 to 736 (RDSV…PRNA), 985 to 1134 (HSDG…STGQ), 1181 to 1208 (GSQT…PESL), and 1286 to 1315 (LLSS…EYGR). The segment covering 351-360 (NMRNHSSSSG) has biased composition (polar residues). A compositionally biased stretch (basic and acidic residues) spans 378–388 (PGREGGGRHPG). 2 stretches are compositionally biased toward polar residues: residues 394–409 (SGLN…QRTG) and 426–435 (FQSPVYTSAS). Composition is skewed to polar residues over residues 552-581 (GQPS…QSNE) and 633-647 (QSAS…QGAL). Residues 696-715 (RPLSSNPSSLSPSPVPNAES) show a composition bias toward low complexity. The span at 716 to 725 (SEVDFEEFEE) shows a compositional bias: acidic residues. Over residues 1009–1021 (PSSSRSGDRAGSS) the composition is skewed to low complexity. The span at 1022 to 1031 (RTDRRSRRDI) shows a compositional bias: basic and acidic residues. A compositionally biased stretch (polar residues) spans 1047–1060 (SVTSQGTQTQNQRL). Short sequence motifs (TQT motif) lie at residues 1053–1055 (TQT) and 1065–1067 (TQT). Positions 1061-1072 (QHAETQTDRDLP) are enriched in basic and acidic residues. The segment covering 1076-1090 (QQPSTSQGSQVTDAT) has biased composition (polar residues). A compositionally biased stretch (acidic residues) spans 1091–1103 (ESLDFETLPEDSG). Composition is skewed to polar residues over residues 1125-1134 (SEPSTDSTGQ) and 1181-1193 (GSQT…NRTR). Over residues 1286-1307 (LLSSSPSLSPVNNSNYSNSDSS) the composition is skewed to low complexity.

This sequence belongs to the WD repeat AMBRA1 family. Component of the DCX(AMBRA1) E3 ubiquitin ligase complex.

The protein localises to the endoplasmic reticulum. It is found in the cytoplasm. Its subcellular location is the cytoskeleton. The protein resides in the cytoplasmic vesicle. It localises to the autophagosome. The protein localises to the mitochondrion. It is found in the cytosol. Its subcellular location is the nucleus. The protein resides in the cell junction. It localises to the focal adhesion. It participates in protein modification; protein ubiquitination. Substrate-recognition component of a DCX (DDB1-CUL4-X-box) E3 ubiquitin-protein ligase complex involved in cell cycle control and autophagy. The DCX(AMBRA1) complex specifically mediates the polyubiquitination of target proteins. Acts as an upstream master regulator of the transition from G1 to S cell phase: ambra1a specifically recognizes and binds phosphorylated cyclin-D (ccnd1, ccnd2 and ccnd3), leading to cyclin-D ubiquitination by the DCX(AMBRA1) complex and subsequent degradation. Acts as a regulator of Cul5-RING (CRL5) E3 ubiquitin-protein ligase complexes by mediating ubiquitination and degradation of Elongin-C (eloc) component of CRL5 complexes. Acts as a key regulator of autophagy by modulating the BECN1-PIK3C3 complex: controls protein turnover during neuronal development, and regulates normal cell survival and proliferation. In normal conditions, ambra1a is tethered to the cytoskeleton via interaction with dyneins light chains. Upon autophagy induction, ambra1a is released from the cytoskeletal docking site to induce autophagosome nucleation by mediating ubiquitination of proteins involved in autophagy. Also acts as an activator of mitophagy. Required for skeletal muscle development. The polypeptide is Activating molecule in BECN1-regulated autophagy protein 1A (Danio rerio (Zebrafish)).